We begin with the raw amino-acid sequence, 131 residues long: Peptide methionine sulfoxide reductase MsrB (131 aa).

The MsrB domain occupies 8–130; the sequence is LEEWRAMLDP…NSVCLDLVPR (123 aa). Zn(2+) contacts are provided by C47, C50, C96, and C99. The active-site Nucleophile is the C119.

It belongs to the MsrB Met sulfoxide reductase family. It depends on Zn(2+) as a cofactor.

It catalyses the reaction L-methionyl-[protein] + [thioredoxin]-disulfide + H2O = L-methionyl-(R)-S-oxide-[protein] + [thioredoxin]-dithiol. The polypeptide is Peptide methionine sulfoxide reductase MsrB (Pseudomonas fluorescens (strain Pf0-1)).